A 702-amino-acid polypeptide reads, in one-letter code: MEDPFEEADQPTTEPGMVLDSVEAGDTTPPTKRKSKFSGFGKIFKPWKWRKKKSSDKFKETSEVLERKISMRKPREELVKRGVLLEDPEQGGEDPGKPSDAMLKNGHTTPIGNARSSSPVQVEEEPVRLASLRKAIPEEDLKKRLGSTGSQPNSEAESVPENVPKPPLLPPKRPLSSSHEASEGQAKDATSSGGTARFIISTSITTAPAATTAATSLAKTVNLSVTPSPAPRTLPAAPASTNTTATPSLTHMVPAKQPPIPPPKPAHRNSNPVIAELSQAINSGTLLSKPSPPLPPKRGIPSTSVPTLESAAAITTKTPSDEREKSTCSMGSELLPMISPRSPSPPLPTHIPPEPPRTPPFPAKTFQVVPEIEFPPSLDLHQEIPQQEDQKKEVPKRILDQNFGEPHIPSRLPPLPLHIRIQQALTSPLPMTPILEGSHRAHSLLFENSDSFSEDSSTLGRTRSLPITIEMLKVPDDEEEEEQTCPSTFSEEMTPTSVIPKLPQCLREEEEKESDSDSEGPIQYRDEEDEDESYQSALANKVKRKDTLAMKLNHRPSEPELNLNSWPCKSKEEWNEIRHQIGNTLIRRLSQRPTPEELEQRNILQPKNEADRQAEKREIKRRLTRKLSQRPTVAELLARKILRFNEYVEVTDAQDYDRRADKPWTKLTPADKAAIRKELNEFKSSEMEVHEESKHFTRYHRP.

Disordered regions lie at residues Met1–Phe37, Arg72–Gly194, and Asn222–Ala363. One copy of the RPEL 1 repeat lies at Glu63–Pro88. Over residues Arg72–Leu84 the composition is skewed to basic and acidic residues. Polar residues predominate over residues Gly106–Val120. Phosphoserine is present on residues Ser116, Ser118, Ser131, and Ser147. Over residues Ser147–Ala156 the composition is skewed to polar residues. The segment covering Val163–Arg173 has biased composition (pro residues). A compositionally biased stretch (low complexity) spans Thr233 to Thr250. 2 positions are modified to phosphoserine: Ser270 and Ser291. Residues Pro301–Thr318 show a composition bias toward polar residues. Ser342 and Ser344 each carry phosphoserine. Positions Ser342–Pro362 are enriched in pro residues. At Thr358 the chain carries Phosphothreonine. Ser427 carries the post-translational modification Phosphoserine. Thr432 carries the post-translational modification Phosphothreonine. Ser443, Ser453, and Ser464 each carry phosphoserine. Residues Ile469 to Ser536 are disordered. A compositionally biased stretch (polar residues) spans Thr484–Ser497. Over residues Glu508 to Ser518 the composition is skewed to acidic residues. Ser514, Ser516, Ser557, and Ser590 each carry phosphoserine. RPEL repeat units lie at residues Asn583–Asn608 and Arg621–Glu646. Residues Arg592–Glu615 are disordered. Residue Ser628 is modified to Phosphoserine.

The protein belongs to the phosphatase and actin regulator family. In terms of assembly, binds PPP1CA and actin.

The protein localises to the cytoplasm. Its subcellular location is the cell projection. The protein resides in the lamellipodium. Its function is as follows. Regulator of protein phosphatase 1 (PP1) required for neural tube and optic fissure closure, and enteric neural crest cell (ENCCs) migration during development. Acts as an activator of PP1 by interacting with PPP1CA and preventing phosphorylation of PPP1CA at 'Thr-320'. During neural tube closure, localizes to the ventral neural tube and activates PP1, leading to down-regulate cell proliferation within cranial neural tissue and the neural retina. Also acts as a regulator of migration of enteric neural crest cells (ENCCs) by activating PP1, leading to dephosphorylation and subsequent activation of cofilin (COF1 or COF2) and repression of the integrin signaling through the RHO/ROCK pathway. This Homo sapiens (Human) protein is Phosphatase and actin regulator 4 (PHACTR4).